Reading from the N-terminus, the 309-residue chain is MAADEDELNLLVIIVDTNPIWWGKQALKESQFTLSKCMDAVMVLANSHLFMNRSNQLAVIASHIQESRLLYPGKNGGLGDFFGDPGNALPDCNPSGSKDGKYELLTVANEVIAEEIKDLMTKSDIKGQHTETLLAGSLAKALCYIHRVNKAVKDNQEMKSRILVIKAAEDSALQYMNFMNVIFAAQKQNILIDACVLDSDSGLLQQACDITGGLYLKVPQMPSLLQYLLWVFLPDQDQRSQLILPPPIHVDYRAACFCHRSLIEIGYVCSVCLSIFCNFSPICTTCETAFKISLPPVLKAKKKKQKVSL.

The C4-type zinc finger occupies 269–286 (CSVCLSIFCNFSPICTTC).

This sequence belongs to the TFB4 family. As to quaternary structure, part of a TFIID-containing RNA polymerase II pre-initiation complex that is composed of TBP and at least GTF2A1, GTF2A2, GTF2E1, GTF2E2, GTF2F1, GTF2H2, GTF2H3, GTF2H4, GTF2H5, GTF2B, TCEA1, ERCC2, ERCC3, TAF1, TAF2, TAF3, TAF4, TAF5, TAF6, TAF7, TAF8, TAF9, TAF10, TAF11, TAF12 and TAF13. Component of the 7-subunit TFIIH core complex composed of XPB/ERCC3, XPD/ERCC2, GTF2H1, GTF2H2, GTF2H3, GTF2H4 and GTF2H5, which is active in NER. The core complex associates with the 3-subunit CDK-activating kinase (CAK) module composed of CCNH/cyclin H, CDK7 and MNAT1 to form the 10-subunit holoenzyme (holo-TFIIH) active in transcription. Interacts with RARA; the interaction requires prior phosphorylation of RARA on 'Ser-369' which then enhances interaction of RARA with CDK7.

It is found in the nucleus. Functionally, component of the general transcription and DNA repair factor IIH (TFIIH) core complex, which is involved in general and transcription-coupled nucleotide excision repair (NER) of damaged DNA and, when complexed to CAK, in RNA transcription by RNA polymerase II. In NER, TFIIH acts by opening DNA around the lesion to allow the excision of the damaged oligonucleotide and its replacement by a new DNA fragment. In transcription, TFIIH has an essential role in transcription initiation. When the pre-initiation complex (PIC) has been established, TFIIH is required for promoter opening and promoter escape. Phosphorylation of the C-terminal tail (CTD) of the largest subunit of RNA polymerase II by the kinase module CAK controls the initiation of transcription. In Mus musculus (Mouse), this protein is General transcription factor IIH subunit 3 (Gtf2h3).